The following is a 1488-amino-acid chain: Chromosome partition protein MukB (1488 aa).

Residue 34–41 (GGNGAGKS) coordinates ATP. Coiled coils occupy residues 326-418 (LEAD…QYNQ), 444-472 (LDTF…QTAH), and 509-602 (RHLA…QRAP). Residues 666–783 (PGGAEDQRLN…SLPIFGRAAR (118 aa)) are flexible hinge. Coiled-coil stretches lie at residues 835 to 923 (EAEI…AKLE), 977 to 1116 (EMLS…AKAG), and 1209 to 1265 (VEAI…LQSV). A disordered region spans residues 1049-1074 (ADSGAEERARQRRDELHAQLSNNRSR). Over residues 1051–1065 (SGAEERARQRRDELH) the composition is skewed to basic and acidic residues.

Belongs to the SMC family. MukB subfamily. Homodimerization via its hinge domain. Binds to DNA via its C-terminal region. Interacts, and probably forms a ternary complex, with MukE and MukF via its C-terminal region. The complex formation is stimulated by calcium or magnesium. Interacts with tubulin-related protein FtsZ.

The protein resides in the cytoplasm. It localises to the nucleoid. Its function is as follows. Plays a central role in chromosome condensation, segregation and cell cycle progression. Functions as a homodimer, which is essential for chromosome partition. Involved in negative DNA supercoiling in vivo, and by this means organize and compact chromosomes. May achieve or facilitate chromosome segregation by condensation DNA from both sides of a centrally located replisome during cell division. The chain is Chromosome partition protein MukB from Salmonella enteritidis PT4 (strain P125109).